Consider the following 129-residue polypeptide: Serum amyloid A-4 protein (129 aa).

Positions 1–18 (MKLLIGILFCTLIMGVTG) are cleaved as a signal peptide. The span at 107 to 121 (AEEWGRSGQDPDHFR) shows a compositional bias: basic and acidic residues. Residues 107 to 129 (AEEWGRSGQDPDHFRPAGLPKKY) form a disordered region.

The protein belongs to the SAA family. In terms of assembly, apolipoprotein of the HDL complex.

The protein resides in the secreted. Its function is as follows. Major acute phase reactant. This Bos taurus (Bovine) protein is Serum amyloid A-4 protein.